The following is a 123-amino-acid chain: Large ribosomal subunit protein bL19 (123 aa).

Belongs to the bacterial ribosomal protein bL19 family.

In terms of biological role, this protein is located at the 30S-50S ribosomal subunit interface and may play a role in the structure and function of the aminoacyl-tRNA binding site. In Treponema pallidum (strain Nichols), this protein is Large ribosomal subunit protein bL19 (rplS).